A 215-amino-acid polypeptide reads, in one-letter code: 3-isopropylmalate dehydratase small subunit (215 aa).

It belongs to the LeuD family. LeuD type 1 subfamily. Heterodimer of LeuC and LeuD.

The catalysed reaction is (2R,3S)-3-isopropylmalate = (2S)-2-isopropylmalate. The protein operates within amino-acid biosynthesis; L-leucine biosynthesis; L-leucine from 3-methyl-2-oxobutanoate: step 2/4. Functionally, catalyzes the isomerization between 2-isopropylmalate and 3-isopropylmalate, via the formation of 2-isopropylmaleate. In Xylella fastidiosa (strain 9a5c), this protein is 3-isopropylmalate dehydratase small subunit.